Consider the following 50-residue polypeptide: PsaJ-like protein asl3190 (50 aa).

The chain crosses the membrane as a helical span at residues 21–41 (VLAVISISVAFSTWAIFNYIF).

Belongs to the PsaJ family.

It is found in the cellular thylakoid membrane. The sequence is that of PsaJ-like protein asl3190 from Nostoc sp. (strain PCC 7120 / SAG 25.82 / UTEX 2576).